The following is a 190-amino-acid chain: Xanthine phosphoribosyltransferase (190 aa).

Residues Leu20 and Asn27 each contribute to the xanthine site. Position 128–132 (128–132 (ANGKA)) interacts with 5-phospho-alpha-D-ribose 1-diphosphate. Xanthine is bound at residue Lys156.

It belongs to the purine/pyrimidine phosphoribosyltransferase family. Xpt subfamily. As to quaternary structure, homodimer.

The protein localises to the cytoplasm. It catalyses the reaction XMP + diphosphate = xanthine + 5-phospho-alpha-D-ribose 1-diphosphate. Its pathway is purine metabolism; XMP biosynthesis via salvage pathway; XMP from xanthine: step 1/1. Functionally, converts the preformed base xanthine, a product of nucleic acid breakdown, to xanthosine 5'-monophosphate (XMP), so it can be reused for RNA or DNA synthesis. This Pseudomonas fluorescens (strain ATCC BAA-477 / NRRL B-23932 / Pf-5) protein is Xanthine phosphoribosyltransferase.